The chain runs to 206 residues: Outer-membrane lipoprotein LolB (206 aa).

A signal peptide spans 1-21 (MHERNYAVFRLLPLASLLLAA). Cys22 carries the N-palmitoyl cysteine lipid modification. Cys22 carries the S-diacylglycerol cysteine lipid modification.

This sequence belongs to the LolB family. In terms of assembly, monomer.

Its subcellular location is the cell outer membrane. Functionally, plays a critical role in the incorporation of lipoproteins in the outer membrane after they are released by the LolA protein. This chain is Outer-membrane lipoprotein LolB, found in Sodalis glossinidius (strain morsitans).